The following is a 620-amino-acid chain: Probable potassium transport system protein Kup (620 aa).

The next 12 membrane-spanning stretches (helical) occupy residues 8–28 (VGLL…SPLY), 50–70 (VLSL…VILI), 102–122 (MLLG…TPAI), 136–156 (PDLK…LFAI), 168–188 (FGPV…ANIV), 211–231 (LMSF…EALY), 246–266 (WFSL…ALLI), 284–304 (MVMP…QAVI), 336–356 (IYVP…VIGF), 368–388 (IAVT…MALL), 393–413 (MALV…YFAA), and 415–435 (IIKV…SFTV).

The protein belongs to the HAK/KUP transporter (TC 2.A.72) family.

The protein localises to the cell inner membrane. The catalysed reaction is K(+)(in) + H(+)(in) = K(+)(out) + H(+)(out). In terms of biological role, transport of potassium into the cell. Likely operates as a K(+):H(+) symporter. The chain is Probable potassium transport system protein Kup from Rhodopseudomonas palustris (strain HaA2).